The primary structure comprises 676 residues: Solute carrier family 26 member 10 (676 aa).

The disordered stretch occupies residues 1–24 (MSGPLASGTCSDPEEVSDLKSPLS). A run of 11 helical transmembrane segments spans residues 101 to 121 (AVAGVTVGVVHVPQGMAFALL), 124 to 144 (VPPVFGLYTSFFPVLIYSLLG), 149 to 165 (LSTGTFAVLSLMTGSVV), 190 to 210 (VGAAAAVAFGSGALMLGMFVL), 226 to 246 (ALTSGAALHVLVSQLPSLLGL), 267 to 287 (ALSQSSPAEVTISALSLVLLV), 300 to 320 (LLTPIPGEVVMVLLATVLCFT), 353 to 373 (ILADSLPISLVTFAVSTSLAS), 398 to 418 (ISSLFSCFPNSATLATTSLLV), 426 to 446 (LAGLFSCAVVLAALLWLRPFF), and 487 to 507 (IVTWVAVVTLNVDLGLAVGVV). In terms of domain architecture, STAS spans 539–660 (ESRKLLQVPG…VSVQDAAAHA (122 aa)).

It belongs to the SLC26A/SulP transporter (TC 2.A.53) family.

The protein localises to the membrane. Chloride/bicarbonate exchanger. This is Solute carrier family 26 member 10 (Slc26a10) from Mus musculus (Mouse).